A 298-amino-acid chain; its full sequence is Protein RKD2 (298 aa).

Composition is skewed to basic and acidic residues over residues 1–10 and 81–102; these read MADHTTKEQK and EQNR…VKET. Disordered stretches follow at residues 1-22 and 73-112; these read MADH…PSFD and SSAS…NERH. One can recognise an RWP-RK domain in the interval 121 to 203; the sequence is SDITTYTTSS…KMEGEENAEK (83 aa). Residues 188-222 are a coiled coil; that stretch reads NVKELQKMEGEENAEKLQDALEMLEKEKRTIEDLP. The segment at 241–279 is disordered; that stretch reads NHKRKKKRSLKSDQSQVPSCSSSGSVPSDESVDEAGMES. The segment covering 252–269 has biased composition (low complexity); that stretch reads SDQSQVPSCSSSGSVPSD. Residues 270–279 show a composition bias toward acidic residues; the sequence is ESVDEAGMES.

It localises to the nucleus. Putative transcription factor. This Arabidopsis thaliana (Mouse-ear cress) protein is Protein RKD2 (RKD2).